The sequence spans 153 residues: Ribosome maturation factor RimP (153 aa).

The protein belongs to the RimP family.

It localises to the cytoplasm. In terms of biological role, required for maturation of 30S ribosomal subunits. The protein is Ribosome maturation factor RimP of Burkholderia pseudomallei (strain 1710b).